The sequence spans 25 residues: Fructokinase-1 (25 aa).

It belongs to the ROK (NagC/XylR) family. In terms of assembly, homodimer. Mg(2+) is required as a cofactor.

It catalyses the reaction D-fructose + ATP = D-fructose 6-phosphate + ADP + H(+). Inhibition by zinc ions (Potential). Inactivated by EDTA. The sequence is that of Fructokinase-1 from Lactococcus lactis subsp. lactis (Streptococcus lactis).